Consider the following 219-residue polypeptide: MDFLQLLSCACIIFTVGMFTTGLTDLKKMKATQSADNVQFLPFLTTCLNNLGWLYYGLLKGDGTVIFVNIIGAFLQTVYIATYCHYTKEKRRVYTQTLLMVSVLCVAWVYFSLVISPGEAQLSQLGLTCSVFTISMYLSPLADLLDIMRTKSVERLSFSLTVATFFTSTSWTLYGLQLGDYYIMVPNTPGIFTSLIRFFLFWWFGAVIPQIPSYKLIQI.

7 helical membrane-spanning segments follow: residues 3–23 (FLQL…TTGL), 38–58 (VQFL…YYGL), 63–83 (GTVI…IATY), 98–118 (LLMV…ISPG), 125–145 (LGLT…ADLL), 156–176 (LSFS…LYGL), and 189–209 (PGIF…AVIP). The region spanning 5–90 (QLLSCACIIF…ATYCHYTKEK (86 aa)) is the MtN3/slv 1 domain. The 81-residue stretch at 124–204 (QLGLTCSVFT…LIRFFLFWWF (81 aa)) folds into the MtN3/slv 2 domain.

It belongs to the SWEET sugar transporter family.

The protein resides in the golgi apparatus membrane. It is found in the cell membrane. In terms of biological role, mediates sugar transport across membranes. This Danio rerio (Zebrafish) protein is Sugar transporter SWEET1 (slc50a1).